A 107-amino-acid chain; its full sequence is Large ribosomal subunit protein P1 (107 aa).

The span at 67–82 (PTATSAAAAPAAGEAS) shows a compositional bias: low complexity. A disordered region spans residues 67–107 (PTATSAAAAPAAGEASGKAEEKKKEEPEEEGDDDMGFGLFD). A compositionally biased stretch (basic and acidic residues) spans 83-92 (GKAEEKKKEE).

Belongs to the eukaryotic ribosomal protein P1/P2 family. P1 and P2 exist as dimers at the large ribosomal subunit.

Its function is as follows. Plays an important role in the elongation step of protein synthesis. The polypeptide is Large ribosomal subunit protein P1 (Leishmania peruviana).